Here is a 101-residue protein sequence, read N- to C-terminus: Guanyl-specific ribonuclease Po1 (101 aa).

A Pyrrolidone carboxylic acid modification is found at Gln-1. Disulfide bonds link Cys-7–Cys-84, Cys-9–Cys-99, and Cys-48–Cys-82. His-36 is a catalytic residue. Glu-54 serves as the catalytic Proton acceptor. The active-site Proton donor is His-87.

It belongs to the ribonuclease N1/T1 family.

The enzyme catalyses [RNA] containing guanosine + H2O = an [RNA fragment]-3'-guanosine-3'-phosphate + a 5'-hydroxy-ribonucleotide-3'-[RNA fragment].. With respect to regulation, inhibited by divalent cations. Inhibition decreases in the order zinc, lead, cadmium, nickel, mercury. This is Guanyl-specific ribonuclease Po1 from Pleurotus ostreatus (Oyster mushroom).